Consider the following 446-residue polypeptide: Glutamine synthetase (446 aa).

Positions 15–103 (ENVKFLRLQI…LICDVYYPDG (89 aa)) constitute a GS beta-grasp domain. Positions 110-446 (PRYVLKRQIE…WELDRYLATY (337 aa)) constitute a GS catalytic domain. Mg(2+) is bound by residues glutamate 134 and glutamate 136. ATP is bound at residue glutamate 186. The Mg(2+) site is built by glutamate 191 and glutamate 198. Residues 242–243 (NG) and glycine 243 each bind L-glutamate. Histidine 247 contributes to the Mg(2+) binding site. Position 251 (serine 251) interacts with ATP. Residues arginine 300, glutamate 306, and arginine 318 each coordinate L-glutamate. 2 residues coordinate ATP: arginine 318 and arginine 323. Glutamate 335 contacts Mg(2+). Arginine 337 serves as a coordination point for L-glutamate.

Belongs to the glutamine synthetase family. As to quaternary structure, interacts with GCBP (TTHA1554). It depends on Mg(2+) as a cofactor.

It localises to the cytoplasm. It catalyses the reaction L-glutamate + NH4(+) + ATP = L-glutamine + ADP + phosphate + H(+). With respect to regulation, activity increases by approximately two-fold in the presence of GCBP. Functionally, catalyzes the ATP-dependent biosynthesis of glutamine from glutamate and ammonia. The polypeptide is Glutamine synthetase (Thermus thermophilus (strain ATCC 27634 / DSM 579 / HB8)).